Consider the following 842-residue polypeptide: TATA box-binding protein-associated factor, RNA polymerase I, subunit C (842 aa).

Disordered stretches follow at residues 574 to 605, 667 to 690, and 702 to 842; these read SSLR…PSWT, RPGD…QQDE, and QAAA…RMGF. A compositionally biased stretch (basic and acidic residues) spans 577–588; sequence REPDHPAPERPA. Residues 745–760 show a composition bias toward polar residues; the sequence is DASSAPHSQDLSNSEA. Positions 783–794 are enriched in basic and acidic residues; sequence QHERRQTLRDYM. Residue T808 is modified to Phosphothreonine. Positions 809–826 are enriched in low complexity; sequence PPSQTSSRQTRSFRQQTP. A compositionally biased stretch (basic residues) spans 833-842; the sequence is PPRKKPRMGF.

As to quaternary structure, component of the transcription factor SL1/TIF-IB complex, composed of TBP and at least TAF1A, TAF1B, TAF1C and TAF1D. In the complex interacts directly with TBP, TAF1A and TAF1B. Interaction of the SL1/TIF-IB subunits with TBP excludes interaction of TBP with the transcription factor IID (TFIID) subunits. Interacts with MYC and RRN3. Interacts with p53/TP53; the interaction prevents the association of SL1/TIF-IB with UBTF and represses RNA polymerase I transcription. Part of Pol I pre-initiation complex (PIC), in which Pol I core assembles with RRN3 and promoter-bound UTBF and SL1/TIF-IB complex.

The protein resides in the nucleus. The protein localises to the nucleolus. Functionally, component of the transcription factor SL1/TIF-IB complex, which is involved in the assembly of the PIC (pre-initiation complex) during RNA polymerase I-dependent transcription. The rate of PIC formation probably is primarily dependent on the rate of association of SL1/TIF-IB with the rDNA promoter. SL1/TIF-IB is involved in stabilization of nucleolar transcription factor 1/UBTF on rDNA. Formation of SL1/TIF-IB excludes the association of TBP with TFIID subunits. Recruits RNA polymerase I to the rRNA gene promoter via interaction with RRN3. The sequence is that of TATA box-binding protein-associated factor, RNA polymerase I, subunit C (Taf1c) from Rattus norvegicus (Rat).